A 142-amino-acid polypeptide reads, in one-letter code: Small heat shock protein IbpB (142 aa).

A sHSP domain is found at 26 to 137 (AGESQSFPPY…AAQRIAISER (112 aa)).

Belongs to the small heat shock protein (HSP20) family. In terms of assembly, homodimer. Forms homomultimers of about 100-150 subunits at optimal growth temperatures. Conformation changes to oligomers at high temperatures or high ionic concentrations. The decrease in size of the multimers is accompanied by an increase in chaperone activity.

It is found in the cytoplasm. Its function is as follows. Associates with aggregated proteins, together with IbpA, to stabilize and protect them from irreversible denaturation and extensive proteolysis during heat shock and oxidative stress. Aggregated proteins bound to the IbpAB complex are more efficiently refolded and reactivated by the ATP-dependent chaperone systems ClpB and DnaK/DnaJ/GrpE. Its activity is ATP-independent. This is Small heat shock protein IbpB from Escherichia coli O7:K1 (strain IAI39 / ExPEC).